Reading from the N-terminus, the 140-residue chain is Probable glycine cleavage system H protein (140 aa).

The 93-residue stretch at arginine 22 to glutamate 114 folds into the Lipoyl-binding domain. An N6-lipoyllysine modification is found at lysine 63.

The protein belongs to the GcvH family. The glycine cleavage system is composed of four proteins: P, T, L and H. (R)-lipoate serves as cofactor.

The glycine cleavage system catalyzes the degradation of glycine. The H protein shuttles the methylamine group of glycine from the P protein to the T protein. This Korarchaeum cryptofilum (strain OPF8) protein is Probable glycine cleavage system H protein.